A 525-amino-acid polypeptide reads, in one-letter code: Probable metalloreductase AIM14 (525 aa).

7 helical membrane passes run 13-33 (NIKYGTFVLVISLLVVCYIAV), 52-72 (PLWLSVLLWTALVIGMGVIHV), 82-102 (FGRLCYALLPLIVFLAIRPSP), 118-138 (LGRLATLVGVVHGVLYTVHFV), 152-172 (FLGVIILAVFLVMVVTSLPFF), 179-199 (LFYTIHYLSAWFVAIATIFHA), and 203-223 (VGWLFFWVALFMGSSLLYRVL). Residues 82-194 (FGRLCYALLP…YLSAWFVAIA (113 aa)) enclose the Ferric oxidoreductase domain. In terms of domain architecture, FAD-binding FR-type spans 215–344 (GSSLLYRVLA…GGAGISFALP (130 aa)). The interval 407 to 478 (LLSEDMEMEE…YHDGRPQPAD (72 aa)) is disordered. Over residues 410-438 (EDMEMEEIGQEDEDRERDELDDLLSEDEG) the composition is skewed to acidic residues. Basic and acidic residues predominate over residues 453-463 (GKDQDNGKREA).

Belongs to the ferric reductase (FRE) family. AIM14 subfamily.

It localises to the membrane. In terms of biological role, probable cell surface metalloreductase. May be involved in iron or copper homeostasis. This is Probable metalloreductase AIM14 (AIM14) from Yarrowia lipolytica (strain CLIB 122 / E 150) (Yeast).